The following is a 188-amino-acid chain: MLDKLVAQYSAIIESLGEDVNREGLRDTPKRAAKAMQFLCRGYNQSLEEVTNGAVFESDTDEMVLVKDIELYSLCEHHLLPFIGRCHIAYIPNGKVLGLSKFARIVDMFARRMQIQENLTRQIAEAVLEVTNAHGVGVIIEARHMCMMMRGVEKQNSVMSSSVMLGSMRNNPSTRSEFLTLVHSRRAL.

Residues cysteine 75, histidine 78, and cysteine 146 each coordinate Zn(2+).

The protein belongs to the GTP cyclohydrolase I family. In terms of assembly, toroid-shaped homodecamer, composed of two pentamers of five dimers.

It carries out the reaction GTP + H2O = 7,8-dihydroneopterin 3'-triphosphate + formate + H(+). Its pathway is cofactor biosynthesis; 7,8-dihydroneopterin triphosphate biosynthesis; 7,8-dihydroneopterin triphosphate from GTP: step 1/1. The polypeptide is GTP cyclohydrolase 1 (Hahella chejuensis (strain KCTC 2396)).